Reading from the N-terminus, the 347-residue chain is MTFDFMLKYSFDKVMDDVQLLVSRLRAREESVDILRQQLCKLQAQLLSMRQCQETILEFDEFSKRVSNQPKGPLIICLAAENKQLEQLKIENKTLRNSLDEHQTALDMIMTKYRGQISKLMRTYQVEHLVQSVINPDNNENRCIKSFYPGPKSVNTPSTNSIDSQSVSQKSNSGKVDEITDGISQSLTEQFTTVASIVRDVTDRGDAYATELEEELHRLRSENAGLREILMISSDCCPDTNSNDCVLPPVSLPNKDSIQHESSSLSSIQSGRFHFLDEDSSSIHLPGIDECLSSVNVNEDSFLYNIPNPSDDSSNSGTISGNHSDEDSDEDDNTVYEVAMNQMINSL.

The stretch at 76–109 forms a coiled coil; sequence ICLAAENKQLEQLKIENKTLRNSLDEHQTALDMI. The interval 149-177 is disordered; it reads PGPKSVNTPSTNSIDSQSVSQKSNSGKVD. A compositionally biased stretch (polar residues) spans 153-174; that stretch reads SVNTPSTNSIDSQSVSQKSNSG. Positions 206-233 form a coiled coil; it reads DAYATELEEELHRLRSENAGLREILMIS. Residues 303-332 form a disordered region; that stretch reads LYNIPNPSDDSSNSGTISGNHSDEDSDEDD. The span at 307-316 shows a compositional bias: low complexity; that stretch reads PNPSDDSSNS.

It belongs to the SIKE family. O-glycosylated.

Its function is as follows. Involved in protection of the schistosome gut. The chain is Circulating cathodic antigen from Schistosoma mansoni (Blood fluke).